The sequence spans 61 residues: MLNIFSLMYICLNSALYSSSFLFAKLPEAYAFLNPIVDVMPVIPVLFFLLAFVWQAAVSFR.

Positions 1–24 (MLNIFSLMYICLNSALYSSSFLFA) are excised as a propeptide. A helical transmembrane segment spans residues 40 to 60 (MPVIPVLFFLLAFVWQAAVSF).

It belongs to the PsbK family. As to quaternary structure, PSII is composed of 1 copy each of membrane proteins PsbA, PsbB, PsbC, PsbD, PsbE, PsbF, PsbH, PsbI, PsbJ, PsbK, PsbL, PsbM, PsbT, PsbX, PsbY, PsbZ, Psb30/Ycf12, at least 3 peripheral proteins of the oxygen-evolving complex and a large number of cofactors. It forms dimeric complexes.

It localises to the plastid. The protein resides in the chloroplast thylakoid membrane. Functionally, one of the components of the core complex of photosystem II (PSII). PSII is a light-driven water:plastoquinone oxidoreductase that uses light energy to abstract electrons from H(2)O, generating O(2) and a proton gradient subsequently used for ATP formation. It consists of a core antenna complex that captures photons, and an electron transfer chain that converts photonic excitation into a charge separation. This chain is Photosystem II reaction center protein K, found in Citrus sinensis (Sweet orange).